We begin with the raw amino-acid sequence, 212 residues long: MRKRILVSACAALAVFAAHMPTALAAATDQLQSFVTGVKSAKGEFTQRQVKGQGDSLKVTGTSSGSFVFSRPGKFTWRYAKPYEQLLQADGQTLYIYDKDLNQVTERKLDGALGSSPAAILFGSNDLEKNFTVKNGPTRDGVEWLELTPKSKDTQFERIGIGFKGGNLEAMELRDAFGNTTLLTFSAMQKNPQLPANAFRFTVPKGADVMKQ.

An N-terminal signal peptide occupies residues 1–25; it reads MRKRILVSACAALAVFAAHMPTALA.

This sequence belongs to the LolA family. Monomer.

The protein resides in the periplasm. Functionally, participates in the translocation of lipoproteins from the inner membrane to the outer membrane. Only forms a complex with a lipoprotein if the residue after the N-terminal Cys is not an aspartate (The Asp acts as a targeting signal to indicate that the lipoprotein should stay in the inner membrane). This Cupriavidus pinatubonensis (strain JMP 134 / LMG 1197) (Cupriavidus necator (strain JMP 134)) protein is Outer-membrane lipoprotein carrier protein.